Consider the following 528-residue polypeptide: ATP synthase subunit alpha 1 (528 aa).

169-176 lines the ATP pocket; the sequence is GDRQTGKT.

Belongs to the ATPase alpha/beta chains family. In terms of assembly, F-type ATPases have 2 components, CF(1) - the catalytic core - and CF(0) - the membrane proton channel. CF(1) has five subunits: alpha(3), beta(3), gamma(1), delta(1), epsilon(1). CF(0) has three main subunits: a(1), b(2) and c(9-12). The alpha and beta chains form an alternating ring which encloses part of the gamma chain. CF(1) is attached to CF(0) by a central stalk formed by the gamma and epsilon chains, while a peripheral stalk is formed by the delta and b chains.

It is found in the cell membrane. It carries out the reaction ATP + H2O + 4 H(+)(in) = ADP + phosphate + 5 H(+)(out). Functionally, produces ATP from ADP in the presence of a proton gradient across the membrane. The alpha chain is a regulatory subunit. This Mycoplasmopsis pulmonis (strain UAB CTIP) (Mycoplasma pulmonis) protein is ATP synthase subunit alpha 1.